Reading from the N-terminus, the 506-residue chain is ATP synthase subunit alpha (506 aa).

Gly-171–Thr-178 serves as a coordination point for ATP.

This sequence belongs to the ATPase alpha/beta chains family. As to quaternary structure, F-type ATPases have 2 components, CF(1) - the catalytic core - and CF(0) - the membrane proton channel. CF(1) has five subunits: alpha(3), beta(3), gamma(1), delta(1), epsilon(1). CF(0) has four main subunits: a(1), b(1), b'(1) and c(9-12).

It is found in the cellular thylakoid membrane. The catalysed reaction is ATP + H2O + 4 H(+)(in) = ADP + phosphate + 5 H(+)(out). Produces ATP from ADP in the presence of a proton gradient across the membrane. The alpha chain is a regulatory subunit. This Trichormus variabilis (strain ATCC 29413 / PCC 7937) (Anabaena variabilis) protein is ATP synthase subunit alpha.